The primary structure comprises 205 residues: Large ribosomal subunit protein uL4 (205 aa).

Residues 56 to 78 form a disordered region; the sequence is ISGTTAKPYRQKHTGRARQGSLR.

This sequence belongs to the universal ribosomal protein uL4 family. In terms of assembly, part of the 50S ribosomal subunit.

Functionally, one of the primary rRNA binding proteins, this protein initially binds near the 5'-end of the 23S rRNA. It is important during the early stages of 50S assembly. It makes multiple contacts with different domains of the 23S rRNA in the assembled 50S subunit and ribosome. Its function is as follows. Forms part of the polypeptide exit tunnel. The polypeptide is Large ribosomal subunit protein uL4 (Ehrlichia canis (strain Jake)).